The sequence spans 476 residues: Flavin-dependent halogenase otaD (476 aa).

Positions 14 and 17 each coordinate FAD. 2 residues coordinate chloride: S304 and G305. V306 is a binding site for FAD.

This sequence belongs to the flavin-dependent halogenase family.

It carries out the reaction ochratoxin B + FADH2 + chloride + O2 = ochratoxin A + FAD + 2 H2O. Its pathway is mycotoxin biosynthesis. Its function is as follows. Flavin-dependent halogenase; part of the gene cluster that mediates the biosynthesis of ochratoxin A (OTA), a mycotoxin composed of a chlorinated type I polyketide dihydroisocoumarin moiety linked to L-phenylalanine, and demonstrated to have nephrotoxic, immunotoxic, genotoxic, neurotoxic, and teratogenic properties. OtaD chlorinates ochratoxin B (OTB) at the C-5 position to form OTA. The pathway begins with the highly reducing polyketide synthase otaA that catalyzes the formation of the isocoumarin group during the initial stages of biosynthesis, starting from one acetate and 4 malonate units, to originate the characteristic pentaketide skeleton 7-methylmellein (7-MM) of the OTA molecule. The newly identified cyclase otaY might be involved in the polyketide cyclization reaction during the initial steps of the OTA biosynthesis. 7-MM is then oxidized into 7-carboxymellein (also called ochratoxin beta) by the cytochrome P450 monooxygenase otaC. The NRPS encoded by the otaB gene is involved in the linking of phenylalanine to the dihydroisocoumarin ring. The reaction catalyzed by NRPS results in the production of ochratoxin B (OTB), which is the non-chlorinated analog of OTA and which subsequently serves as the substrate of the halogenase otaD for chlorination activity to form the final molecular structure of OTA, containing a chlorine atom in the C-5 position of the molecule. In Aspergillus niger (strain ATCC MYA-4892 / CBS 513.88 / FGSC A1513), this protein is Flavin-dependent halogenase otaD.